We begin with the raw amino-acid sequence, 546 residues long: Acyl-CoA ligase oryP (546 aa).

ATP contacts are provided by residues 166 to 174, 300 to 305, and R403; these read TSGTTGAPK and QFWLNL. CoA contacts are provided by residues 412 to 414 and 482 to 484; these read WDH and LLR. An ATP-binding site is contributed by K499.

It belongs to the ATP-dependent AMP-binding enzyme family.

Its pathway is secondary metabolite biosynthesis. In terms of biological role, acyl-CoA ligase; part of the gene cluster that mediates the biosynthesis of oryzines, natural products with an unusual maleidride backbone. The two subunits of the fungal fatty acid synthase oryfasA and oryfasB probably form octenoic acid. This fatty acid is most likely activated by the acyl-CoA ligase oryP to give octenyl-CoA before the citrate synthase-like protein oryE catalyzes condensation with oxaloacetate to form tricarboxylic acid. The next steps of the pathways are conjectural, but a favorite possible route has been proposed, beginning with decarboxylation and concomitant dehydration by the decarboxylase oryM, followed by tautomerization, which may lead to the production of a diene intermediate. Reduction of this diene intermediate could give the known metabolite piliformic acid. On the pathway to oryzine B and oryzine A, however, hydroxylation of the diene by the alpha-ketoglutarate-dependent dioxygenase oryG and lactonisation by the lactonohydrolases oryH or oryL could give oryzine B directly. Finally, enoyl reduction by the dehydrogenase oryD would then convert oryzine B into oryzine A. This is Acyl-CoA ligase oryP from Aspergillus oryzae (strain ATCC 42149 / RIB 40) (Yellow koji mold).